Consider the following 357-residue polypeptide: Serpentine receptor class epsilon-31 (357 aa).

7 consecutive transmembrane segments (helical) span residues 28–48 (VISIFELLSYILCGYILNLSI), 61–81 (LMFLTVPLFAIWYELIIGKFI), 121–141 (LLIFGGFLQWHTIYSIVFGIL), 165–185 (IPIFLIIICQVLAIFMTFIVI), 192–212 (IIARLPFIFLCPISFAVWLFV), 253–273 (LVAVVLVYIMVCFLGIVSLTF), and 283–303 (FVENFLFFHPIPICLTAMFSI).

Belongs to the nematode receptor-like protein sre family.

The protein localises to the membrane. In Caenorhabditis elegans, this protein is Serpentine receptor class epsilon-31 (sre-31).